Consider the following 739-residue polypeptide: Interleukin-17 receptor D (739 aa).

Positions 1–16 (MAPWLQLCSVFFTVNA) are cleaved as a signal peptide. Residues 17 to 299 (CLNGSQLAVA…VHSPWAGPIR (283 aa)) lie on the Extracellular side of the membrane. Residues asparagine 19, asparagine 55, asparagine 62, asparagine 80, asparagine 137, asparagine 171, asparagine 206, and asparagine 277 are each glycosylated (N-linked (GlcNAc...) asparagine). Residues 300–320 (AVAITVPLVVISAFATLFTVM) form a helical membrane-spanning segment. At 321 to 739 (CRKKQQENIY…TDELHAVAPL (419 aa)) the chain is on the cytoplasmic side. In terms of domain architecture, SEFIR spans 355-509 (RPKVFLCYSS…LMDNLPQLCS (155 aa)). Disordered stretches follow at residues 614–635 (GPAD…EARP) and 650–719 (VKAG…SSGS). Over residues 667-702 (SSVPSSELSLPLMEGLSTDQTETSSLTESVSSSSGL) the composition is skewed to low complexity.

As to quaternary structure, interacts with MAP3K7. Self-associates. Interacts with FGFR1, FGFR2 and phosphorylated MAP2K1 or MAP2K2. Associates with a MAP2K1/2-MAPK1/3 complex. Expressed in umbilical vein endothelial cells and in several highly vascularized tissues such as kidney, colon, skeletal muscle, heart and small intestine. Highly expressed in ductal epithelial cells of salivary glands, seminal vesicles and the collecting tubules of the kidney. Isoform 1 is also highly expressed in both fetal and adult brain, pituitary, tonsils, spleen, adenoids, fetal kidney, liver, testes and ovary. Isoform 1 is also expressed at moderate levels in primary aortic endothelial cells and adrenal medulla, and at low levels in adrenal cortex. Isoform 4 is specifically and highly expressed in pituitary, fetal brain and umbilical vein endothelial cells.

It localises to the golgi apparatus membrane. It is found in the cell membrane. The protein localises to the cytoplasm. Functionally, feedback inhibitor of fibroblast growth factor mediated Ras-MAPK signaling and ERK activation. Regulates the nuclear ERK signaling pathway by spatially blocking nuclear translocation of activated ERK without inhibiting cytoplasmic phosphorylation of ERK. Mediates JNK activation and may be involved in apoptosis. May inhibit FGF-induced FGFR1 tyrosine phosphorylation. Might have a role in the early stages of fate specification of GnRH-secreting neurons. Inhibits TGFB-induced epithelial-to-mesenchymal transition in lens epithelial cells. This chain is Interleukin-17 receptor D (IL17RD), found in Homo sapiens (Human).